The following is a 273-amino-acid chain: NADPH-dependent 7-cyano-7-deazaguanine reductase (273 aa).

81–83 (VES) provides a ligand contact to substrate. Residue 83–84 (SK) participates in NADPH binding. The active-site Thioimide intermediate is the Cys179. Asp186 serves as the catalytic Proton donor. 218-219 (AE) is a substrate binding site. 247 to 248 (RG) provides a ligand contact to NADPH.

The protein belongs to the GTP cyclohydrolase I family. QueF type 2 subfamily. Homodimer.

It is found in the cytoplasm. It catalyses the reaction 7-aminomethyl-7-carbaguanine + 2 NADP(+) = 7-cyano-7-deazaguanine + 2 NADPH + 3 H(+). It participates in tRNA modification; tRNA-queuosine biosynthesis. Its function is as follows. Catalyzes the NADPH-dependent reduction of 7-cyano-7-deazaguanine (preQ0) to 7-aminomethyl-7-deazaguanine (preQ1). The polypeptide is NADPH-dependent 7-cyano-7-deazaguanine reductase (Rickettsia prowazekii (strain Madrid E)).